Consider the following 75-residue polypeptide: Cytochrome c oxidase subunit 6C (75 aa).

The Mitochondrial matrix segment spans residues 1-13 (MAPEVLPKPQMRG). The helical transmembrane segment at 14–54 (LLARRLRFHMVTGFVLSLGVAALYKVGVADKRKKAYADFYR) threads the bilayer. Topologically, residues 55–75 (NYDAMKDFEEMRKAGIFQSVK) are mitochondrial intermembrane.

Belongs to the cytochrome c oxidase subunit 6c family. As to quaternary structure, component of the cytochrome c oxidase (complex IV, CIV), a multisubunit enzyme composed of 14 subunits. The complex is composed of a catalytic core of 3 subunits MT-CO1, MT-CO2 and MT-CO3, encoded in the mitochondrial DNA, and 11 supernumerary subunits COX4I, COX5A, COX5B, COX6A, COX6B, COX6C, COX7A, COX7B, COX7C, COX8 and NDUFA4, which are encoded in the nuclear genome. The complex exists as a monomer or a dimer and forms supercomplexes (SCs) in the inner mitochondrial membrane with NADH-ubiquinone oxidoreductase (complex I, CI) and ubiquinol-cytochrome c oxidoreductase (cytochrome b-c1 complex, complex III, CIII), resulting in different assemblies (supercomplex SCI(1)III(2)IV(1) and megacomplex MCI(2)III(2)IV(2)).

Its subcellular location is the mitochondrion inner membrane. It participates in energy metabolism; oxidative phosphorylation. Its function is as follows. Component of the cytochrome c oxidase, the last enzyme in the mitochondrial electron transport chain which drives oxidative phosphorylation. The respiratory chain contains 3 multisubunit complexes succinate dehydrogenase (complex II, CII), ubiquinol-cytochrome c oxidoreductase (cytochrome b-c1 complex, complex III, CIII) and cytochrome c oxidase (complex IV, CIV), that cooperate to transfer electrons derived from NADH and succinate to molecular oxygen, creating an electrochemical gradient over the inner membrane that drives transmembrane transport and the ATP synthase. Cytochrome c oxidase is the component of the respiratory chain that catalyzes the reduction of oxygen to water. Electrons originating from reduced cytochrome c in the intermembrane space (IMS) are transferred via the dinuclear copper A center (CU(A)) of subunit 2 and heme A of subunit 1 to the active site in subunit 1, a binuclear center (BNC) formed by heme A3 and copper B (CU(B)). The BNC reduces molecular oxygen to 2 water molecules using 4 electrons from cytochrome c in the IMS and 4 protons from the mitochondrial matrix. This Macaca silenus (Lion-tailed macaque) protein is Cytochrome c oxidase subunit 6C (COX6C).